The primary structure comprises 136 residues: Large ribosomal subunit protein eL27 (136 aa).

One can recognise a KOW domain in the interval 5–40; that stretch reads MKPGKVVLVLAGRYSGRKAVIVKNIDDGTSDRPYSH. K27 and K93 each carry N6-acetyllysine.

Belongs to the eukaryotic ribosomal protein eL27 family. Component of the large ribosomal subunit. Interacts with RRP1B. Component of the large ribosomal subunit. Interacts with RRP1B. Interacts with DHX33.

The protein resides in the cytoplasm. It is found in the cytosol. Its subcellular location is the rough endoplasmic reticulum. Component of the large ribosomal subunit. Required for proper rRNA processing and maturation of 28S and 5.8S rRNAs. The sequence is that of Large ribosomal subunit protein eL27 (RPL27) from Canis lupus familiaris (Dog).